Consider the following 71-residue polypeptide: Mitochondrial import protein 1 (71 aa).

The chain crosses the membrane as a helical span at residues Y22–A44.

It belongs to the MIM1 family. In terms of assembly, component of the mitochondrial outer import machinery (MIM) complex containing at least mim1 and mim2. Interacts with mim2. Interacts with mitophagy receptor atg43.

It localises to the mitochondrion outer membrane. Functionally, component of the mitochondrial outer import machinery (MIM) complex that mediates transport of proteins into mitochondrial compartments. Promotes the insertion of tom70 into the outer mitochondrial membrane. Promotes the insertion of atg43 into the outer mitochondrial membrane. The MIM complex cooperates with the receptor tom70 in binding of precursor proteins and promotes their insertion and assembly into the outer membrane. Involved in import of the subset of proteins with multiple alpha-helical transmembrane segments. Required for the assembly of the TOM (translocase of outer membrane) receptor complex, which is responsible for the recognition and translocation of cytosolically synthesized mitochondrial preproteins. The polypeptide is Mitochondrial import protein 1 (Schizosaccharomyces pombe (strain 972 / ATCC 24843) (Fission yeast)).